We begin with the raw amino-acid sequence, 968 residues long: RNA polymerase-associated protein RapA (968 aa).

The region spanning 163–332 (EVGQRFAPRV…FARLRLLDPD (170 aa)) is the Helicase ATP-binding domain. 176-183 (DEVGLGKT) is a binding site for ATP. The short motif at 278 to 281 (DEAH) is the DEAH box element. The region spanning 491 to 678 (RVDWLIDFLK…NTKSRYQELK (188 aa)) is the Helicase C-terminal domain.

This sequence belongs to the SNF2/RAD54 helicase family. RapA subfamily. In terms of assembly, interacts with the RNAP. Has a higher affinity for the core RNAP than for the holoenzyme. Its ATPase activity is stimulated by binding to RNAP.

Its function is as follows. Transcription regulator that activates transcription by stimulating RNA polymerase (RNAP) recycling in case of stress conditions such as supercoiled DNA or high salt concentrations. Probably acts by releasing the RNAP, when it is trapped or immobilized on tightly supercoiled DNA. Does not activate transcription on linear DNA. Probably not involved in DNA repair. This chain is RNA polymerase-associated protein RapA, found in Shewanella piezotolerans (strain WP3 / JCM 13877).